The following is a 304-amino-acid chain: UDP-N-acetylenolpyruvoylglucosamine reductase (304 aa).

In terms of domain architecture, FAD-binding PCMH-type spans 31–196; that stretch reads KVGGPADYLA…ISAKFNLKPG (166 aa). Residue Arg175 is part of the active site. Ser225 functions as the Proton donor in the catalytic mechanism. Glu295 is a catalytic residue.

The protein belongs to the MurB family. Requires FAD as cofactor.

The protein resides in the cytoplasm. The catalysed reaction is UDP-N-acetyl-alpha-D-muramate + NADP(+) = UDP-N-acetyl-3-O-(1-carboxyvinyl)-alpha-D-glucosamine + NADPH + H(+). It functions in the pathway cell wall biogenesis; peptidoglycan biosynthesis. Cell wall formation. The protein is UDP-N-acetylenolpyruvoylglucosamine reductase of Streptococcus thermophilus (strain CNRZ 1066).